Reading from the N-terminus, the 169-residue chain is S-ribosylhomocysteine lyase (169 aa).

Fe cation-binding residues include histidine 54, histidine 58, and cysteine 128.

It belongs to the LuxS family. In terms of assembly, homodimer. It depends on Fe cation as a cofactor.

It carries out the reaction S-(5-deoxy-D-ribos-5-yl)-L-homocysteine = (S)-4,5-dihydroxypentane-2,3-dione + L-homocysteine. Functionally, involved in the synthesis of autoinducer 2 (AI-2) which is secreted by bacteria and is used to communicate both the cell density and the metabolic potential of the environment. The regulation of gene expression in response to changes in cell density is called quorum sensing. Catalyzes the transformation of S-ribosylhomocysteine (RHC) to homocysteine (HC) and 4,5-dihydroxy-2,3-pentadione (DPD). The chain is S-ribosylhomocysteine lyase from Shewanella woodyi (strain ATCC 51908 / MS32).